Consider the following 414-residue polypeptide: Glutamyl-tRNA reductase (414 aa).

Substrate is bound by residues 49 to 52 (TCNR), serine 108, 113 to 115 (EPQ), and glutamine 119. The active-site Nucleophile is the cysteine 50. NADP(+) is bound at residue 188–193 (GAGQTG).

This sequence belongs to the glutamyl-tRNA reductase family. Homodimer.

The catalysed reaction is (S)-4-amino-5-oxopentanoate + tRNA(Glu) + NADP(+) = L-glutamyl-tRNA(Glu) + NADPH + H(+). The protein operates within porphyrin-containing compound metabolism; protoporphyrin-IX biosynthesis; 5-aminolevulinate from L-glutamyl-tRNA(Glu): step 1/2. Functionally, catalyzes the NADPH-dependent reduction of glutamyl-tRNA(Glu) to glutamate 1-semialdehyde (GSA). The polypeptide is Glutamyl-tRNA reductase (Francisella philomiragia subsp. philomiragia (strain ATCC 25017 / CCUG 19701 / FSC 153 / O#319-036)).